The following is a 320-amino-acid chain: Glycerol-3-phosphate dehydrogenase [NAD(P)+] (320 aa).

NADPH is bound by residues F11, R30, and K102. Sn-glycerol 3-phosphate is bound by residues K102, G130, and S132. A134 contributes to the NADPH binding site. Residues K185, D238, S248, R249, and N250 each coordinate sn-glycerol 3-phosphate. Catalysis depends on K185, which acts as the Proton acceptor. Residue R249 participates in NADPH binding. E270 contributes to the NADPH binding site.

The protein belongs to the NAD-dependent glycerol-3-phosphate dehydrogenase family.

It localises to the cytoplasm. It catalyses the reaction sn-glycerol 3-phosphate + NAD(+) = dihydroxyacetone phosphate + NADH + H(+). The catalysed reaction is sn-glycerol 3-phosphate + NADP(+) = dihydroxyacetone phosphate + NADPH + H(+). It participates in membrane lipid metabolism; glycerophospholipid metabolism. In terms of biological role, catalyzes the reduction of the glycolytic intermediate dihydroxyacetone phosphate (DHAP) to sn-glycerol 3-phosphate (G3P), the key precursor for phospholipid synthesis. The chain is Glycerol-3-phosphate dehydrogenase [NAD(P)+] from Roseobacter denitrificans (strain ATCC 33942 / OCh 114) (Erythrobacter sp. (strain OCh 114)).